We begin with the raw amino-acid sequence, 507 residues long: MVTIRADEISNIIRERIEQYNREVKIVNTGTVLQVGDGIARIYGLDEVMAGELVEFEEGTIGIALNLESNNVGVVLMGDGLMIQEGSSVKATGKIAQIPVSEAYLGRVINALAKPIDGRGAISSSESRLIESPAPGIISRRSVYEPLQTGLIAIDSMIPIGRGQRELIIGDRQTGKTAVATDTILNQQGQNVICVYVAIGQKASSVAQVVNALQERGAMEYTIVVAETADSPATLQYLAPYTGAALAEYFMYRERHTLIIYDDLSKQAQAYRQMSLLLRRPPGREAYPGDVFYLHSRLLERAAKPSSSLGEGSMTALPIVETQSGDVSAYIPTNVISITDGQIFLSADLFNAGIRPAINVGISVSRVGSAAQIKAMKQVAGKLKLELAQFAELEAFAQFASDLDKATQNQLARGQRLRELLKQSQAAPFTVAEQIMTIYTGTNGYLDSLEIGQVRKFLVELRTYLKTSKTQFQEIISSTKTFTEEAEALLKEAIQEQMERFLLQEQV.

170–177 is an ATP binding site; it reads GDRQTGKT.

This sequence belongs to the ATPase alpha/beta chains family. F-type ATPases have 2 components, CF(1) - the catalytic core - and CF(0) - the membrane proton channel. CF(1) has five subunits: alpha(3), beta(3), gamma(1), delta(1), epsilon(1). CF(0) has four main subunits: a, b, b' and c.

It is found in the plastid. Its subcellular location is the chloroplast thylakoid membrane. The enzyme catalyses ATP + H2O + 4 H(+)(in) = ADP + phosphate + 5 H(+)(out). Functionally, produces ATP from ADP in the presence of a proton gradient across the membrane. The alpha chain is a regulatory subunit. This Populus alba (White poplar) protein is ATP synthase subunit alpha, chloroplastic.